The following is a 596-amino-acid chain: Potassium-transporting ATPase potassium-binding subunit (596 aa).

10 helical membrane passes run 6–26 (ILTI…LGGF), 67–87 (AIGL…LQLF), 136–156 (GLTT…IALI), 177–197 (ITLY…VGQG), 283–303 (LSNF…CFTF), 314–334 (WVVL…AVHF), 413–433 (GLYG…LMIG), 450–470 (MVAI…AIAV), 518–538 (MLAI…LALA), and 560–580 (LFIV…YVPA).

Belongs to the KdpA family. The system is composed of three essential subunits: KdpA, KdpB and KdpC.

The protein resides in the cell inner membrane. Part of the high-affinity ATP-driven potassium transport (or Kdp) system, which catalyzes the hydrolysis of ATP coupled with the electrogenic transport of potassium into the cytoplasm. This subunit binds the periplasmic potassium ions and delivers the ions to the membrane domain of KdpB through an intramembrane tunnel. The chain is Potassium-transporting ATPase potassium-binding subunit from Polynucleobacter asymbioticus (strain DSM 18221 / CIP 109841 / QLW-P1DMWA-1) (Polynucleobacter necessarius subsp. asymbioticus).